Consider the following 138-residue polypeptide: Large-conductance mechanosensitive channel (138 aa).

3 helical membrane-spanning segments follow: residues 15–35, 38–58, and 80–100; these read VDLA…NSVV, IFMP…MFIQ, and GNFI…FFLV.

The protein belongs to the MscL family. As to quaternary structure, homopentamer.

Its subcellular location is the cell inner membrane. Its function is as follows. Channel that opens in response to stretch forces in the membrane lipid bilayer. May participate in the regulation of osmotic pressure changes within the cell. The sequence is that of Large-conductance mechanosensitive channel from Bartonella bacilliformis (strain ATCC 35685 / KC583 / Herrer 020/F12,63).